Here is a 567-residue protein sequence, read N- to C-terminus: MNILNLKIIMFLLISNIIVVGGAWATSTCPDWPATRIAVEINALEQQLNKWSAAYHQQGHSPVTDDIYDQLQDKLRVWQSCRGLPDKTESQPIPGKGQFLHPVAHTGLKKLKDETALTRWMAGRKNLWVQPKVDGVAVTLVYHGGKLVQLLSRGNGVKGQNWTEKAPFISAIPQYIANAPALLTLQGELFLLMDGHQQAKSGGVNARSTVAGALMRKSPSPLLAQVGVFIWAWPDGPTTMKEKVALLQVMGFPFTAKYSEPVMSHLDVVQWRQFWFQAPLPFVTDGVVVRQEEEPAGRYWQATPGQWSMAWKYPPLQHIAEVKDIHFTLGRTGKGTVVLEVLPIKIDDKWIRRVNIGSVTRWKQWDIAPGDHITLALAGHGIPRLDNVVWRVHQRNTITAPNWDKFHQLSCFQRLPHGCEPQFLSRLIWLSGPGGLDIGGIGGGFWQKLIHHELINDLVGWLLLTPEQIASIPGIGNARAEKIYQQFQRAKQQPFSRWLLALGFPQVVSVDAQWQVVLRRSLSEWATMAGIGQMRAKQIKHFLDHPDVQALADFLSTQKVVGFELTE.

The active-site N6-AMP-lysine intermediate is the lysine 132.

The protein belongs to the NAD-dependent DNA ligase family. LigB subfamily.

The catalysed reaction is NAD(+) + (deoxyribonucleotide)n-3'-hydroxyl + 5'-phospho-(deoxyribonucleotide)m = (deoxyribonucleotide)n+m + AMP + beta-nicotinamide D-nucleotide.. Functionally, catalyzes the formation of phosphodiester linkages between 5'-phosphoryl and 3'-hydroxyl groups in double-stranded DNA using NAD as a coenzyme and as the energy source for the reaction. The sequence is that of DNA ligase B from Yersinia pseudotuberculosis serotype IB (strain PB1/+).